We begin with the raw amino-acid sequence, 5154 residues long: MTLKIKCVANYIKEKIPNVLFLCDPEARLQQLTASVPLCEQRKYFKQTNKRLEESMGAMHRKMAKVISGLQSKVLPPMSPKVVTEEEVNRMLTPSEFLKEMSLTTEQKLASTRIICRPQITELLDMGETTHQKFSRVDLDQALFQPFPSEIIFQNYSPCEVYEVPLVLRNNDKIPRMVKVVEESSPYFKIISPKDIGHKVAPGVPSVFRILFTPEENKDYAHMLTCITEREKFIVPVKARGARAILDFPDELNFSTCPVKYNTQKVLLVRNIGNKDSMFHLKTRSPYSVEPTGGILNVGESMQLEVDFEPQTVGSHDGKLIVTYDTGEMVFVCLYGVAIDVNIRLDKNSLIMEKTYISLANQRSITIHNRTNIIAHFQWKVFATEEEEDKEKYKICDGLNKEEKQETSMILEDSVLDPSLRERLSIISRTFENQRKLVQGDSMLFLDHVFTIEPPEGDVWPNSSAEITVYFNPLEAKLYQQTVYCDISGREIRLPLRIRGEGMGPKLHFNFELLDIGKVFIGSAHCYEAILSNKGSIDALFNVIPPTSALGACFVFNPKEGIIEPSGVQAVQISFSSTILGYFEEEFLIDVNGSPEPVKMTIRGCVIGPTFHFNVPALNFGNVSYGFPHTLMCSLNNTSLVPMTFKLRVRGDGEGMSSIPSYSQESDSKQWSGINTEMPTTKPKEFTISPNSGTIRAQGFTAIKVTLCSNTVQKYELALVVDVEGIGEEVLALLITARCVVPKLQLVTTEVDFGRCFLKYPYEKTIQLVNHDDLPGCYKVLPQLYENSPPVLLSSPSPCGVISPHSTVSIPLALETQVIGAHRSIVYISVFGSQEAPLACNIQSIGEGPVIFIHPTQIDFGNIYVLKDTSRILQLSNQSFIPAVFRVRMANKKSLWTVKPSEGAVPAEDDIPLTLTANLDDIVTFKDTVILEIKHSNTYRIPIQATGIGSTIVSDKPFAPELNLGAHFSLDTHYYRFKLTNKGRRVQQLFWMNDDFRPKEKQSKKEPGKKGSTSSSRRQSKASQEPTDNGNPVFQLYPVRMELYPGQTIDVILEGYSATPKKVKEKLVCQAIVGTQKGKSLLMSVNIICEFIAPIIQLSAKQLLYRLEKKPNSNLESDYQSLVIKNITTLPVNMLLSTTRPFFICETDKSLLPATPKPIKLEVDEEKHLLIKFDPSYRNDLNNWVAEEVLSIKYLEHPQVDNLGLRAEVHYPNLSFEVMDIDFGCILNDTEVIRYIMITNCSPLVVKFRWFFLVDEEENQIRFAPCMKPYSAFLSQMESIAATSVTASSLAAPHTVEYTEMDFSDSIKTILMDDEAGPEEIKKPATSTMVSEAIKYSSAGTERSQSQPDYPECMWIYEQDEMLSIGIEEVFDILPLYGVLRPYSSHQISFTFYGHCDIIARAKALCEVEGGPTYEVLLKGEASLVNYSFDTKDINYGLQLFDHVTEREITLKNTGKVGFEFNVLSNYRSSQRNLLPGVPLILPLSGFIQSNKEQVLKVYYLPGIPEVFQRNFQIQIAHLVPENITLYGEGIFPRISLDLHRNLQGNEKYEHFLEQAKKNVEKEYTKYEAVDQYEVMAEELPEEETAEISAHVQMEVERLIVQDYALEHQRSISNNTEDIYFSQRSCRKLTKVQLPEYILDFGYIVLGDVRTHIVKITNTSHFPVSFHAEKQVLHETGFSTELDRVKNLPYYETETFEVRCDPQGANLPVGNKEVILPIKVYGGPTIHLCLQATVIIPSMTLSCNKIEFATIQCGQCMVETIQLSNHLQVPCEWFVHTPKSTNKLDKHMPKYLRRKLQAEMIPKSRIFEIQPTSGILDPGERANVQVKFMPKEEKLYSQSLLFQIGQSSQKLTLLAQGQGLEPRLEFSPSVLELGPLLPFASGDEAEVIVRNPCNFPIEFYSLEFDQQYLLEEKMLRQLKGYDSYNTLLLPPRNPGEKLPPEVYDYFKEMKKSKEEHMKAKYMENLENEEEEMNTSDQGTTSTKRTSISRGISVTSNLEERHLTIEAKNYLDEDDYEESLEKLTFQTDKMQSTDSHSVEEVGEVESNPVSKAIARHLGIDISAEGRLAKNRKGIAIIVHGTPLSGKTANAISMAKFYNAACLNIDSIVLEALSDTNNILGIRARELCIRAAIEQSMREAEESAHESSMTQNTVVPARLSTENLGRFTSELTLITQEYKVPKTVRGSVMLPKGKADSHFTGSQKQHHQHQSETPQVQISSSPLLPGPTHRRLSVSASIGGETGLMSCVLPDDLLIQILAERIQLSNCFRGVVFDGLDTLFARNAPSALHCLLKAIGSREHIYVINMSQDYVVMKAQEKAKKEQEENKRKEALAKEKERLQTLDEDEYDALTAEEKVAFDRDVRQALRERKKRELERLAKEMQEKKLQQELERQKEEDELKRKVKRPKAGPAAKEEPPLKKAQGATNKQLAAVAKIELKMESIERKVSVREHATLEETTRKKKAMTEYPLLIPISQEQEDSEGDFLKDSDKNLAQKFKIYDMCLKDVQNILMYWDRKQGMMVPHTGTDEMSHEADDQRQAPSGGGGRKGRKDRERERLEKERAEKERLEREKAERERLEKLKALEERSDVEGEGEEEHEGKKDLGVPFINIQSPDFEGVSWKQALESDKLPKGDQILDILGLGSSGPPIPPPVLFSIISYPAKRQSLVATEILKHFVFVIPPNDDIPLMDEKKDPEGDSDIFLNTIITKAQEEQPSPPKGSKQKLKDKPEQVRETQKEKRRTYSSRKGLPGGTSGSIVPMSDIDQNSFDGEHSQEKFIRLNHFRWIVPPNGEVTLRVHFSSLDVGNYDQTFNFELLGTRRQYQLYCRGVCTYPYICRDPKVVFSQRKKDMKLKEVVVKKYVVSMEKFYFGPLLCGKSRDKYKSSLFPGNMETLTILNDSPMVVEAYFCFQHDIKASTYFLEPVNMTLKPNEKQALNVWAYPTAVGIFEDSIVCCIKENPEPAIFKLSCQGIRPEIEVEPRQLHFDRLLLHRKETKIVILRNVTPLPVAWRISNLEHLGEDFTVSMMQGTMLPKGEYGLQVHFQPSKPVNIKKAIRIEVLDAENLVGVVQIENILIFAESYDIALDITFPKGAEGGLDFGTLRVMEEVKQTLQLKNRGKYEIIFSFTVDTLGVLPTNLSSMISVQPKRGTLASIDKPTTVQVFFRARKEVKIDCQPILRCQIIEPTLPEGEIIASIPIKFSVNAVYSKFTISPSSIINFGALICGTRKSITFTIENQGIIDFKYALYRLTGESPILQKKITSHMRHGRTRESESFYKPGATKMAKFSDTVQKDTNIANQARFTHGMFTVYPGFGSIPSGGQQVITIECFADPVGRCEEFLAIDISDRDPRENPAGIPYTLLAEACLPAFVTDNNILIFEEHQICTSPNLYHILQTIQSGGLFVEDENKFIFCNVLVGHQAKARFKISNVGKISCDINIVIKPISNKPANRITDTFDVEPSKMCIGSRSHAFVTVLFTPQTMQTYQCIFEATLDGLPSNIARSRGLVFDIVGEGTLPRVTVIRPTLYNQHGNPLLLFKRLLLGHSEKLPLILKNNGTIPAQLHVDLRDQLGVFSLKGRPTTSYIYIMEENKPNEKVKKAHTASLVVSPGDTAEFDVFFHSNKIGRMTGTIHLSVINNQYEETMIHLVGESYEDDITLDNIHGLISSTSQESSDKSEVIEIAEESTMEDLVTAALMEHIQFGYCHIGISYNVSFTITNHSQVNVIRFEWPLLATLSFSPQIGHLHPGCSKDVVVTLKSESPITLKKMCVKCKLSKIMFQLPVDQVPDWDDRMRTVKWVDAPRNTPLTLNTKRKVIEMDPEPAHSVVEENYRELRIQFSANVDFASYQCETTEVFFKETLVYQTRVFEFDLVNTGQVLLEFCWISEEASKAVSFAMPERQGSSQKELSQGSGSSLDSALDRWTEASPSPFSVEPPSGVVPVGKTQKLKVKFSPMDIGEFESSLYCQIPNLPLGEQGPILITKGRSVLPFCHFDLKESDYISGHRRNPELRGPGAGPLEPNTRVIEFTSVGIGGKNVQTFTILNPTNSTYSFCWTSEETESLQHPPAFVCLTEKGIIHPEKKAEIIFQFLPAHLDITEEFWTFSIPEHNISVPFLLVGKTTDPLISLDKSHLNFSSLLIGREARETVKIINKEEQGFNFAFQDNSRYSEGFNNSLIVCPMEGWIPPLSRFPVDIFFTPKQEGDVNFNLICNIKKKAHPLTLNVKAEGYTMNAEVKCRDRMGTTILLTSTQVNTINFYEVELNECVQCEFSFINTGKFNFSYQAELSGPKLLLQYLDFTPTDSSVDVGQSEPANLSFQPYQKCVLKGLELKIKISHGPTFVCNILGCAVSPAVHFSFTSHNFGTCFIYQAGMPPYKQILVVTNKEETSMSLDCLYTNTPHIEVNFNVDVIKPGKTLEIPITFYPREAISYRELIPFEINGLSQQTVEIKGKGTEMKLLVLDPANRIVKLGAVLPGQVVRKTVSLVNNSLAQLTFNHSVLFSIPELQEAKVITLEPFHTITMKPKEVCKLEITFAPKKRVPPFSEEVFMEWMGLLRPLFLLSGCCQALEISLDQEHLPFGPVVYQTQATRRILIMNTGDVGARFKWDVKKLKPHFSISPEEGYIISGTEVALEVTYHPTEIGKESLYKNILCFIQGGNPLCLTLSGTCVGPPVVKEVVNFNCQVRSRHTQTILLSNRSNQTWNLHPIFEGEHWEGPEFITLEAHQQNKPYEITYKPRTMNLENRKHQGTLFFPLPDGTGWLYALHGTAELPKAVANIYREVPCKTPYTELLPISNWLNKPQRFRVIVEILKPEKTDLSVTLKGLDYIDVLSGSKKDYKLNFFSYKEGLYTAKVIFRNEVTNEFLYYTVSFRVTPSGIIKTIQMTSPVRQSVSASIKLENPLPYSVTFSTECKLSDISLPSQFAVPPNSEGTFSFEFQPLKAGELCGRLTLHNSDLGYYQYELALKALPAPPEKPVHFQTVLGSSQSILAKFTNYTRLKTEYYCKTDCSDFHTEKVINAAPGAQGGTEVSVEVFFEPSHLGETKGILCLSSLIGGEYIIPLFGIALPPKPQGPFLIRAGYNIIIPFKNVFLHATSFSFIVENPAFSIRAAETVRPKKINNITVYFEGNPSGSKTPITSKLIVTCPQCEGTESGIKWVYYLKGITP.

Residues M409–G800 are interaction with KIF9. Positions R997–K1009 are enriched in basic and acidic residues. Disordered regions lie at residues R997–V1033, E1966–S1988, A2193–L2222, K2383–T2423, H2521–R2572, and K2706–Q2762. Positions K1010–Q1024 are enriched in low complexity. The stretch at E1948–Q1977 forms a coiled coil. 2 stretches are compositionally biased toward polar residues: residues T1974 to S1988 and S2209 to P2220. Positions Y2308–V2444 form a coiled coil. Basic and acidic residues-rich tracts occupy residues K2383 to K2398, G2523 to R2535, K2548 to R2572, and K2721 to K2734. The stretch at G2543–E2588 forms a coiled coil.

In terms of assembly, interacts with KIF9. Expressed in brain and testis. Expressed in ciliated epithelial cells lining bronchi and oviduct, and in spermatocytes.

The protein resides in the cell projection. It localises to the cilium. The protein localises to the cytoplasm. Its subcellular location is the cytoskeleton. It is found in the cilium axoneme. The protein resides in the flagellum. In terms of biological role, required for ciliary motility. The sequence is that of Hydrocephalus-inducing protein (Hydin) from Mus musculus (Mouse).